Reading from the N-terminus, the 531-residue chain is Apolipoprotein N-acyltransferase (531 aa).

Transmembrane regions (helical) follow at residues 8–28, 34–54, 69–89, 105–125, 136–156, 178–198, and 207–227; these read IILL…LLAV, FGIF…IDGV, PAAI…WWLG, LAVV…VVIA, IAAL…VFTG, VVNL…PALI, and GLAI…YRLA. In terms of domain architecture, CN hydrolase spans 243–493; the sequence is VQPVIDQAKK…RGVLDTILPG (251 aa). Glu-287 (proton acceptor) is an active-site residue. Lys-351 is a catalytic residue. Residue Cys-405 is the Nucleophile of the active site. The chain crosses the membrane as a helical span at residues 507-527; it reads IFWLSMAILSIVASFSRFGFN.

This sequence belongs to the CN hydrolase family. Apolipoprotein N-acyltransferase subfamily.

Its subcellular location is the cell inner membrane. The catalysed reaction is N-terminal S-1,2-diacyl-sn-glyceryl-L-cysteinyl-[lipoprotein] + a glycerophospholipid = N-acyl-S-1,2-diacyl-sn-glyceryl-L-cysteinyl-[lipoprotein] + a 2-acyl-sn-glycero-3-phospholipid + H(+). It functions in the pathway protein modification; lipoprotein biosynthesis (N-acyl transfer). In terms of biological role, catalyzes the phospholipid dependent N-acylation of the N-terminal cysteine of apolipoprotein, the last step in lipoprotein maturation. The polypeptide is Apolipoprotein N-acyltransferase (Sinorhizobium medicae (strain WSM419) (Ensifer medicae)).